The following is a 107-amino-acid chain: Small ribosomal subunit protein bS18c (107 aa).

Residues 85-95 (KKAQRFKRRQS) show a composition bias toward basic residues. The segment at 85–107 (KKAQRFKRRQSTARTVGLRTRNK) is disordered.

The protein belongs to the bacterial ribosomal protein bS18 family. Part of the 30S ribosomal subunit.

The protein resides in the plastid. Its subcellular location is the chloroplast. The polypeptide is Small ribosomal subunit protein bS18c (Oenothera argillicola (Appalachian evening primrose)).